The primary structure comprises 548 residues: Non-structural protein NS1 (548 aa).

This sequence belongs to the orbivirus non-structural protein NS1 family.

The sequence is that of Non-structural protein NS1 (Segment-5) from Camelus dromedarius (Dromedary).